The following is a 245-amino-acid chain: CGSPAIQPQVTGYARIVNGEEAVPHSWPWQVSLQQSNGFHFCGGSLINENWVVTAAHCNVRTYHRVIVGEHDKASDENIQILKPSMVFTHPKWDSRTINNDISLIKLASPAVLGTNVSPVCLGESSDVFAPGMKCVTSGWGLTRYNAPGTPNKLQQAALPLMSNEECSQTWGNNMISDVMICAGAAGATSCMGDSGGPLVCQKDNVWTLVGIVSWGSSRCSVTTPAVYARVTELRGWVDQILAAN.

5 cysteine pairs are disulfide-bonded: Cys1-Cys121, Cys42-Cys58, Cys135-Cys201, Cys167-Cys182, and Cys191-Cys220. A propeptide spanning residues Ala14 to Arg15 is cleaved from the precursor. A Peptidase S1 domain is found at Ile16–Ala243. Active-site charge relay system residues include His57 and Asp101. Residue Ser195 is the Charge relay system of the active site.

This sequence belongs to the peptidase S1 family.

The protein resides in the secreted. Its subcellular location is the extracellular space. It catalyses the reaction Preferential cleavage: Tyr-|-Xaa, Trp-|-Xaa, Phe-|-Xaa, Leu-|-Xaa.. The sequence is that of Chymotrypsin B from Gadus morhua (Atlantic cod).